Reading from the N-terminus, the 388-residue chain is S-adenosylmethionine synthase (388 aa).

Residue H14 coordinates ATP. Residue D16 coordinates Mg(2+). K(+) is bound at residue E42. 2 residues coordinate L-methionine: E55 and Q98. Residues 98–108 form a flexible loop region; that stretch reads QSAEISSAVDQ. ATP is bound by residues 166-168, D242, 248-249, A265, and K269; these read DGK and RK. An L-methionine-binding site is contributed by D242. K273 is an L-methionine binding site.

It belongs to the AdoMet synthase family. As to quaternary structure, homotetramer; dimer of dimers. Requires Mg(2+) as cofactor. It depends on K(+) as a cofactor.

It is found in the cytoplasm. It carries out the reaction L-methionine + ATP + H2O = S-adenosyl-L-methionine + phosphate + diphosphate. It participates in amino-acid biosynthesis; S-adenosyl-L-methionine biosynthesis; S-adenosyl-L-methionine from L-methionine: step 1/1. Functionally, catalyzes the formation of S-adenosylmethionine (AdoMet) from methionine and ATP. The overall synthetic reaction is composed of two sequential steps, AdoMet formation and the subsequent tripolyphosphate hydrolysis which occurs prior to release of AdoMet from the enzyme. The protein is S-adenosylmethionine synthase of Oenococcus oeni (strain ATCC BAA-331 / PSU-1).